Here is a 345-residue protein sequence, read N- to C-terminus: Fe(3+) ions import ATP-binding protein FbpC (345 aa).

The region spanning 3-233 (LSLKAATVRF…PADEFVARFL (231 aa)) is the ABC transporter domain. 35 to 42 (GPSGSGKS) serves as a coordination point for ATP.

It belongs to the ABC transporter superfamily. Fe(3+) ion importer (TC 3.A.1.10) family. In terms of assembly, the complex is composed of two ATP-binding proteins (FbpC), two transmembrane proteins (FbpB) and a solute-binding protein (FbpA).

The protein resides in the cell membrane. It catalyses the reaction Fe(3+)(out) + ATP + H2O = Fe(3+)(in) + ADP + phosphate + H(+). Part of the ABC transporter complex FbpABC involved in Fe(3+) ions import. Responsible for energy coupling to the transport system. The protein is Fe(3+) ions import ATP-binding protein FbpC of Streptomyces avermitilis (strain ATCC 31267 / DSM 46492 / JCM 5070 / NBRC 14893 / NCIMB 12804 / NRRL 8165 / MA-4680).